A 364-amino-acid chain; its full sequence is Histidinol-phosphate aminotransferase (364 aa).

N6-(pyridoxal phosphate)lysine is present on Lys-226.

It belongs to the class-II pyridoxal-phosphate-dependent aminotransferase family. Histidinol-phosphate aminotransferase subfamily. As to quaternary structure, homodimer. It depends on pyridoxal 5'-phosphate as a cofactor.

The catalysed reaction is L-histidinol phosphate + 2-oxoglutarate = 3-(imidazol-4-yl)-2-oxopropyl phosphate + L-glutamate. The protein operates within amino-acid biosynthesis; L-histidine biosynthesis; L-histidine from 5-phospho-alpha-D-ribose 1-diphosphate: step 7/9. The sequence is that of Histidinol-phosphate aminotransferase from Campylobacter jejuni (strain RM1221).